The primary structure comprises 177 residues: MTTICSVKYNGQTAIAGDGQVTLGKSIIAKTTAKKIRRIYHDQVVIGFAGGVADAVSLQEMLEGKLESYSGDLRRAAVEMAQSWRKDQTLQKLEAMVIAFNDQDLLLISGNGEVLEPDESVVAIGSGGYYAQAAAVGMLRHASGMTASEIAKEAVNIAADIDVFTDHEIVTDEIEEK.

The active site involves threonine 2. Alanine 159, aspartate 162, and threonine 165 together coordinate Na(+).

The protein belongs to the peptidase T1B family. HslV subfamily. As to quaternary structure, a double ring-shaped homohexamer of HslV is capped on each side by a ring-shaped HslU homohexamer. The assembly of the HslU/HslV complex is dependent on binding of ATP.

The protein resides in the cytoplasm. It catalyses the reaction ATP-dependent cleavage of peptide bonds with broad specificity.. Its activity is regulated as follows. Allosterically activated by HslU binding. In terms of biological role, protease subunit of a proteasome-like degradation complex believed to be a general protein degrading machinery. This is ATP-dependent protease subunit HslV from Lactobacillus leichmannii.